The primary structure comprises 873 residues: Calmodulin-dependent glutamylase SidJ (873 aa).

The disordered stretch occupies residues Q16 to P90. Residues S22–G58 are compositionally biased toward polar residues. Mg(2+) is bound by residues D542 and D545. The interval N851–L873 is disordered.

In terms of assembly, interacts with host calmodulin/CALM1; this interaction is required for glutamylase activity. The cofactor is Mg(2+).

The enzyme catalyses L-glutamyl-[protein] + L-glutamate + ATP = gamma-L-glutamyl-L-glutamyl-[protein] + ADP + phosphate + H(+). The catalysed reaction is (L-glutamyl)(n)-gamma-L-glutamyl-L-glutamyl-[protein] + L-glutamate + ATP = (L-glutamyl)(n+1)-gamma-L-glutamyl-L-glutamyl-[protein] + ADP + phosphate + H(+). Glytamylation catalyzed by SidJ requires host calmodulin and can be regulated by intracellular changes in Ca2+ concentrations. Also requires ATP. Its function is as follows. Glutamylase that mediates the covalent attachment of glutamate moieties to SdeA on one of the catalytic residues that is required for its mono-ADP-ribosyltransferase activity. In turn, inhibits SdeA ubiquitinating activity. Also glutamylates related SdeB, SdeC and SidE. Glutamylase activity only occurs in the host since it requires host calmodulin. May also reverse the SdeA-mediated substrate ubiquitination by cleaving the phosphodiester bond that links phosphoribosylated ubiquitin to protein substrates via its deubiquitinase activity. The polypeptide is Calmodulin-dependent glutamylase SidJ (Legionella pneumophila subsp. pneumophila (strain Philadelphia 1 / ATCC 33152 / DSM 7513)).